The following is a 201-amino-acid chain: Regulator of G-protein signaling 1 (201 aa).

Positions 75-191 constitute an RGS domain; that stretch reads SLEKLLISED…LKSEIFLRLA (117 aa).

It localises to the cell membrane. The protein resides in the cytoplasm. It is found in the cytosol. In terms of biological role, regulates G protein-coupled receptor signaling cascades, including signaling downstream of the N-formylpeptide chemoattractant receptors and leukotriene receptors. Inhibits B cell chemotaxis. Inhibits signal transduction by increasing the GTPase activity of G protein alpha subunits, thereby driving them into their inactive GDP-bound form. The protein is Regulator of G-protein signaling 1 (rgs1) of Xenopus tropicalis (Western clawed frog).